Here is a 521-residue protein sequence, read N- to C-terminus: Bifunctional purine biosynthesis protein PurH (521 aa).

Residues 1 to 145 enclose the MGS-like domain; it reads MIKQALISVS…KNHRDVTVVV (145 aa).

This sequence belongs to the PurH family.

It carries out the reaction (6R)-10-formyltetrahydrofolate + 5-amino-1-(5-phospho-beta-D-ribosyl)imidazole-4-carboxamide = 5-formamido-1-(5-phospho-D-ribosyl)imidazole-4-carboxamide + (6S)-5,6,7,8-tetrahydrofolate. The catalysed reaction is IMP + H2O = 5-formamido-1-(5-phospho-D-ribosyl)imidazole-4-carboxamide. The protein operates within purine metabolism; IMP biosynthesis via de novo pathway; 5-formamido-1-(5-phospho-D-ribosyl)imidazole-4-carboxamide from 5-amino-1-(5-phospho-D-ribosyl)imidazole-4-carboxamide (10-formyl THF route): step 1/1. It participates in purine metabolism; IMP biosynthesis via de novo pathway; IMP from 5-formamido-1-(5-phospho-D-ribosyl)imidazole-4-carboxamide: step 1/1. This chain is Bifunctional purine biosynthesis protein PurH, found in Burkholderia cenocepacia (strain HI2424).